The following is a 308-amino-acid chain: D-alanine--D-alanine ligase (308 aa).

The ATP-grasp domain occupies 108–303 (KLVWKAAGLP…YEALCLKVLE (196 aa)). Residue 134-189 (EAELGLPMFVKPACEGSSLGVTKVRKAGELAQAYAEARKFDPLVLAEQFVGGGEYT) participates in ATP binding. 3 residues coordinate Mg(2+): Asp-257, Glu-270, and Asn-272.

Belongs to the D-alanine--D-alanine ligase family. The cofactor is Mg(2+). Requires Mn(2+) as cofactor.

The protein localises to the cytoplasm. It catalyses the reaction 2 D-alanine + ATP = D-alanyl-D-alanine + ADP + phosphate + H(+). It participates in cell wall biogenesis; peptidoglycan biosynthesis. Functionally, cell wall formation. In Laribacter hongkongensis (strain HLHK9), this protein is D-alanine--D-alanine ligase.